Reading from the N-terminus, the 45-residue chain is Large ribosomal subunit protein bL34 (45 aa).

The protein belongs to the bacterial ribosomal protein bL34 family.

The chain is Large ribosomal subunit protein bL34 from Salinispora tropica (strain ATCC BAA-916 / DSM 44818 / JCM 13857 / NBRC 105044 / CNB-440).